The sequence spans 73 residues: MQIKHLITLFFLVLIVADQCSAFFSLIPSLVGGLISAFKGRRKREISAQIEQYKDLQKREAELEKLLDRLPMY.

The first 22 residues, 1-22, serve as a signal peptide directing secretion; it reads MQIKHLITLFFLVLIVADQCSA. The residue at position 39 (Lys39) is a Lysine amide. A propeptide spanning residues 45-73 is cleaved from the precursor; it reads EISAQIEQYKDLQKREAELEKLLDRLPMY.

The protein belongs to the non-disulfide-bridged peptide (NDBP) superfamily. Short antimicrobial peptide (group 4) family. As to expression, expressed by the venom gland.

It localises to the secreted. Antimicrobial peptide with activity against Gram-positive bacterial strains (S.aureus (MIC=2-140 uM), methicillin-resistant S.aureus (MRSA) (MIC=8-17 uM), S.epidermidis (MIC=1.17 uM), and the yeasts C.albicans, C.krusei, and C.glabrata (MIC=34-69 uM)). Acts by disrupting the cell membrane (observed on outer layer of the S.aureus). Is not active against Gram-negative bacteria (E.coli, E.Cloacae, P.aeruginosa), and the Gram-positive bacterium E.faecalis. Also shows toxicity against several cell lines, but possess low hemolytic activity at the highest concentration tested. Also shows antiparasitic activity against Trypanosoma cruzi by decreasing the viability of the epimastigote and trypomastigote forms of the parasite. Displays high hydroxyl radical scavenging activity (antioxidant action). In a wound infection model, the topical application of this peptide demonstrates antibacterial effects, as well as an ability to accelerate wound closure speed, which suggests the induction of tissue repair. In the model of polymicrobial sepsis, it exhibits an antibiotic effect, reducing the levels of microorganisms in the infectious focus and the inflammatory responses in the lung and cecum of septic animals. The protein is Stigmurin of Tityus stigmurus (Brazilian scorpion).